Here is a 146-residue protein sequence, read N- to C-terminus: Large ribosomal subunit protein uL16 (146 aa).

Belongs to the universal ribosomal protein uL16 family. As to quaternary structure, part of the 50S ribosomal subunit.

Functionally, binds 23S rRNA and is also seen to make contacts with the A and possibly P site tRNAs. This Thermomicrobium roseum (strain ATCC 27502 / DSM 5159 / P-2) protein is Large ribosomal subunit protein uL16.